Reading from the N-terminus, the 1371-residue chain is Pleckstrin homology-like domain family B member 1 (1371 aa).

Position 51 is a phosphoserine (Ser51). The 62-residue stretch at 64–125 folds into the FHA domain; the sequence is TVIGSAARDI…LTQGCMLCLG (62 aa). The residue at position 131 (Arg131) is an Asymmetric dimethylarginine. The segment at 153–182 is disordered; sequence GPTYNPGSAESESLVNGNHTAQPATRAPSA. Over residues 157-175 the composition is skewed to polar residues; sequence NPGSAESESLVNGNHTAQP. Phosphoserine occurs at positions 192, 220, and 223. 2 disordered regions span residues 211-336 and 368-573; these read AAGK…TDSP and PSSG…RVPI. Composition is skewed to low complexity over residues 252-273 and 296-312; these read SPAF…HSPS and LQPP…SDSP. Phosphoserine is present on residues Ser325 and Ser335. Over residues 368–377 the composition is skewed to polar residues; sequence PSSGARSQPA. Phosphoserine is present on residues Ser382, Ser405, Ser431, Ser445, Ser463, Ser472, Ser491, and Ser503. Positions 464–477 are enriched in low complexity; it reads PSLSRRALSPLPAR. Residues 483–493 are compositionally biased toward basic and acidic residues; sequence KLSREVAESPR. An Omega-N-methylarginine modification is found at Arg514. 2 positions are modified to phosphoserine: Ser520 and Ser522. The residue at position 524 (Thr524) is a Phosphothreonine. Phosphoserine occurs at positions 535, 541, 553, 557, 565, 580, 585, and 683. Positions 547 to 559 are enriched in polar residues; the sequence is GSLTGASPRQSPR. Disordered regions lie at residues 672–714 and 942–1020; these read ESGG…GAKH and GLAA…QNGT. 2 stretches are compositionally biased toward basic and acidic residues: residues 682-696 and 703-714; these read ESME…KEEC and QQEHEDAPGAKH. The stretch at 688–798 forms a coiled coil; that stretch reads DEENLKEECS…ETGIQKDRDK (111 aa). Ser976 and Ser1022 each carry phosphoserine. Positions 976–997 are enriched in low complexity; it reads SPLPRTRSGPLPSSSGSSSSSS. Residues 1124-1143 are disordered; the sequence is SMETSISTGGNSACSPDNMS. The stretch at 1150-1216 forms a coiled coil; that stretch reads MGKIEEMEKM…QQLVEKEVKL (67 aa). The PH domain occupies 1261-1364; it reads SKVCRGYLIK…WMDVIVTGAE (104 aa).

The polypeptide is Pleckstrin homology-like domain family B member 1 (Phldb1) (Mus musculus (Mouse)).